Reading from the N-terminus, the 483-residue chain is Dual specificity protein kinase CLK1 (483 aa).

The disordered stretch occupies residues 1–49 (MRHSKRTYCPDWDERDWDYGTWRSSSSHKRKKRSHSSAREQKRCRYDHS). Residues 26 to 36 (SSHKRKKRSHS) show a composition bias toward basic residues. Positions 29–33 (KRKKR) match the Nuclear localization signal motif. The segment covering 37–49 (SAREQKRCRYDHS) has biased composition (basic and acidic residues). Phosphoserine is present on Ser61. Low complexity predominate over residues 84-111 (EPGHPYGEPGSRYQMHSSKSSGRSGRSS). Residues 84–146 (EPGHPYGEPG…SRSVEDDEEG (63 aa)) are disordered. Residues 112–137 (YKSKHRSRHHTSQHHSHGKSHRRKRS) show a composition bias toward basic residues. Ser139 carries the phosphoserine modification. Positions 160 to 476 (YEIVDTLGEG…LKEALKHPFF (317 aa)) constitute a Protein kinase domain. ATP is bound by residues 166–174 (LGEGAFGKV) and Lys190. Asp287 acts as the Proton acceptor in catalysis.

Belongs to the protein kinase superfamily. CMGC Ser/Thr protein kinase family. Lammer subfamily. As to quaternary structure, interacts with PPIG and UBL5. Post-translationally, autophosphorylates on all three types of residues.

It localises to the nucleus. It catalyses the reaction L-seryl-[protein] + ATP = O-phospho-L-seryl-[protein] + ADP + H(+). It carries out the reaction L-threonyl-[protein] + ATP = O-phospho-L-threonyl-[protein] + ADP + H(+). The catalysed reaction is L-tyrosyl-[protein] + ATP = O-phospho-L-tyrosyl-[protein] + ADP + H(+). Its activity is regulated as follows. Regulates splicing of its own pre-mRNA according to its kinase activity; increased expression of the catalytically active form influences splicing to generate the catalytically inactive splicing variant lacking the kinase domain. Leucettine L41 inhibits its kinase activity and affects the regulation of alternative splicing mediated by phosphorylation of SR proteins. Its function is as follows. Dual specificity kinase acting on both serine/threonine and tyrosine-containing substrates. Phosphorylates serine- and arginine-rich (SR) proteins of the spliceosomal complex and may be a constituent of a network of regulatory mechanisms that enable SR proteins to control RNA splicing. Phosphorylates: SRSF1, SRSF3 and PTPN1. Regulates the alternative splicing of tissue factor (F3) pre-mRNA in endothelial cells. The chain is Dual specificity protein kinase CLK1 from Mus musculus (Mouse).